The primary structure comprises 452 residues: MSLVIQPLLMRALNPNLSSILISGRGFSLIQHRRFAFRAGSGNNNSEQNQVHINTAPIEFTANLLAGKNETEAETEGLKGTALKALRCNDTTSDSEPQHNMENLPFKVKLVDKGQRKQIKESKARVEPRPEVSLKKTYIEPYLQLSKPRLTVLVMLSAICSYALSPYPATVLQLLSLTVGTTLCSASANAINMGREPDFDRQMIRTQARPVVRGIVSPNQAFKFATAAGTLGTSILWLGVNPTVAFLGFSNIALYAWLYTSLKRKHIINTWVGALVGAIPPLMGWAASSPLSHPGAWCLAGLLYAWQFPHFNTLSHNIRNEYKNAGYVMTAWKNPKLNARVALRYSLLMFPLCFGLSYFNVTDWYYQLDSAFVNAWMSLWAFKFYFQQKRNYSKEIYNNKTEFNKGLAMANVYARRTFWVSVLHLPAVLILAILHKKDRWDWLFEDKKQLSA.

Residues 1 to 27 constitute a mitochondrion transit peptide; the sequence is MSLVIQPLLMRALNPNLSSILISGRGF. 7 helical membrane-spanning segments follow: residues 152–172, 235–255, 267–287, 291–311, 341–361, 364–386, and 417–437; these read VLVMLSAICSYALSPYPATVL, ILWLGVNPTVAFLGFSNIALY, IINTWVGALVGAIPPLMGWAA, LSHPGAWCLAGLLYAWQFPHF, VALRYSLLMFPLCFGLSYFNV, WYYQLDSAFVNAWMSLWAFKFYF, and TFWVSVLHLPAVLILAILHKK.

It belongs to the UbiA prenyltransferase family.

It is found in the mitochondrion membrane. Its function is as follows. Converts protoheme IX and farnesyl diphosphate to heme O. This chain is Protoheme IX farnesyltransferase, mitochondrial (COX10), found in Kluyveromyces lactis (strain ATCC 8585 / CBS 2359 / DSM 70799 / NBRC 1267 / NRRL Y-1140 / WM37) (Yeast).